The primary structure comprises 497 residues: Ammonium transporter 1 (497 aa).

Residues 1–32 (MSSTTDATPTPSGVNGGDSMTVNLNQFYNNGD) are Extracellular-facing. The helical transmembrane segment at 33–53 (VAWILTSTALVFIMIPGVGFF) threads the bilayer. The Cytoplasmic portion of the chain corresponds to 54–63 (YSGLARRRSA). The chain crosses the membrane as a helical span at residues 64 to 84 (ISMLFLSMMSVAIVAFQWFFW). The Extracellular portion of the chain corresponds to 85–122 (GYSLTFSHEGGPYIGSLANFGLRQTLGRPSSGASSVPD). A helical membrane pass occupies residues 123–143 (ILFCVFQGMFAAITPALAIGA). Residues 144–150 (AADRGRM) are Cytoplasmic-facing. A helical transmembrane segment spans residues 151-171 (FPCMVFMFLWTSIVYDPIAFW). The Extracellular segment spans residues 172–187 (TWNPNGWLNKLGSYDF). The chain crosses the membrane as a helical span at residues 188-208 (AGGSPVHISSGMAALAYSIVI). Over 209 to 223 (GKRCDHGTTKYRPHN) the chain is Cytoplasmic. A helical membrane pass occupies residues 224–244 (VPHVVLGTVFLWFGWFGFNGG). Topologically, residues 245–253 (SSAAANMRG) are extracellular. Residues 254–274 (VMAVVVTHLAASVGGIVWCVI) traverse the membrane as a helical segment. Residues 275–281 (DFAKNRH) lie on the Cytoplasmic side of the membrane. A helical membrane pass occupies residues 282–302 (WSVVGFCEGAVAGLVAITPGS). Gly-303 is a topological domain (extracellular). A helical transmembrane segment spans residues 304 to 324 (FVPPWAAVVIGALGAVFCYAA). Topologically, residues 325 to 338 (TYLKKIIRVDDALD) are cytoplasmic. Residues 339-359 (IFAEHGVGGMVGNILTALFAA) traverse the membrane as a helical segment. Residues 360–394 (DYIEALDGSGTAYTGGWITHHYIQLGYQLADTVSC) are Extracellular-facing. Residues 395–415 (AAYSFAVSCALLFVMNYIPGL) traverse the membrane as a helical segment. The Cytoplasmic segment spans residues 416–497 (SLRVSREDEV…AESEAQAPAI (82 aa)). The interval 440 to 497 (YKDSTDEPPPITTSGVQYTSPTVSDSASNEKEQEHRAQNEAQKEEEYRAESEAQAPAI) is disordered. The span at 451–466 (TTSGVQYTSPTVSDSA) shows a compositional bias: polar residues. Over residues 467 to 490 (SNEKEQEHRAQNEAQKEEEYRAES) the composition is skewed to basic and acidic residues.

This sequence belongs to the ammonia transporter channel (TC 1.A.11.2) family.

It is found in the membrane. Its function is as follows. Transporter for ammonium to use as a nitrogen source. Under ammonium limitation acts as an ammonium sensor, generating a signal that leads to pseudohyphal growth. The chain is Ammonium transporter 1 (amt1) from Schizosaccharomyces pombe (strain 972 / ATCC 24843) (Fission yeast).